The primary structure comprises 426 residues: CinA-like protein (426 aa).

Belongs to the CinA family.

The protein is CinA-like protein of Gloeobacter violaceus (strain ATCC 29082 / PCC 7421).